Consider the following 867-residue polypeptide: MNYPFQDIEQKWQKYWDHHQTFRTNTHSSKPKYYCLDMFPYPSGAGLHVGHPEGYTATDIISRLKRMEGYEVLHPMGWDAFGLPAERYAMTTGIHPRTTTKNNIDTFRRQIKSLGLSYDWEREISTTHPDYYRWTQWIFLQIYNSYFDRKQNKAVPITTLIQTLEREGSLFFEGVELPKGIQFTASEWKSKSRKEKEDILSHFRLVYEANIPVNWCEALGTVLANEEVEEWTSKGYSVERKPMRQYMMRITAYAERLLNDLSLCEWPPSTLEMQRNWIGKSEGLELSFHVPSLNKDITVYTTRPDTIFGATYLVLAPEHALVAELTTPEQTEAVGQYQKDCSLKSDLERTELNKDKTGVFTGAYAQLPTDPSVKVPIYISDYVLISYGTGAIMAVPAHDQRDYDFAVKFNLPIKQVIDGKMETNLAFDSKDSVCINSSSAEVQLDGKSYKDAFQTMVVWAEKKGIGRKKIQFKLRDWLFARQRYWGEPIPLVHFEDGSPKALSDSELPLVLPDLEEFKPSGTGESPLALAKDWLVYKDPETGEIGKRETNTMPQWAGSCYYYLRYIDPRNNDKLIDPELEKMWMPVEVYVGGAEHAVLHLLYSRFWHKILFDLGHVSTPEPFKKLVHQGLILGEDKGKMSKSRGNVVNPDDVVSEFGADTLRLFEMFMGPFEMSKPWSKNGVDGVFRFLNRVWRLFHSGENESFFVEDIEPNEAEQKTLHRTIKKVKDDIDSFSFNTAVSQMMIFINEFTSNPRKPKQVLEPFVLALSPFAPHLAEELWAKLGHTDSLAYHPYPKWDEKYLIDANITIVVQVNGKMRGEFLAPREIEEKEALSLAKEVEKAKPFWVGKEIKKEIYVKGKLVNIVVAG.

A 'HIGH' region motif is present at residues 40-51; that stretch reads PYPSGAGLHVGH. The short motif at 638–642 is the 'KMSKS' region element; it reads KMSKS. K641 contributes to the ATP binding site.

This sequence belongs to the class-I aminoacyl-tRNA synthetase family.

The protein resides in the cytoplasm. It catalyses the reaction tRNA(Leu) + L-leucine + ATP = L-leucyl-tRNA(Leu) + AMP + diphosphate. This chain is Leucine--tRNA ligase, found in Leptospira biflexa serovar Patoc (strain Patoc 1 / Ames).